The following is a 140-amino-acid chain: Phosphoribosyl-AMP cyclohydrolase (140 aa).

Asp-78 lines the Mg(2+) pocket. Residue Cys-79 coordinates Zn(2+). Asp-80 and Asp-82 together coordinate Mg(2+). Zn(2+)-binding residues include Cys-96 and Cys-103.

The protein belongs to the PRA-CH family. As to quaternary structure, homodimer. Mg(2+) is required as a cofactor. Requires Zn(2+) as cofactor.

It is found in the cytoplasm. It catalyses the reaction 1-(5-phospho-beta-D-ribosyl)-5'-AMP + H2O = 1-(5-phospho-beta-D-ribosyl)-5-[(5-phospho-beta-D-ribosylamino)methylideneamino]imidazole-4-carboxamide. The protein operates within amino-acid biosynthesis; L-histidine biosynthesis; L-histidine from 5-phospho-alpha-D-ribose 1-diphosphate: step 3/9. In terms of biological role, catalyzes the hydrolysis of the adenine ring of phosphoribosyl-AMP. This Ralstonia nicotianae (strain ATCC BAA-1114 / GMI1000) (Ralstonia solanacearum) protein is Phosphoribosyl-AMP cyclohydrolase.